The following is a 224-amino-acid chain: UPF0441 protein ECA0329 (224 aa).

Residues threonine 180–glycine 224 form a disordered region. A compositionally biased stretch (low complexity) spans glutamine 204–glycine 224.

This sequence belongs to the UPF0441 family.

In Pectobacterium atrosepticum (strain SCRI 1043 / ATCC BAA-672) (Erwinia carotovora subsp. atroseptica), this protein is UPF0441 protein ECA0329.